The primary structure comprises 435 residues: Cytochrome c oxidase subunit 3 (435 aa).

A run of 7 helical transmembrane segments spans residues 70–90 (VAPL…FGVI), 96–116 (LLIA…SIIF), 132–152 (LVMG…SFFW), 176–196 (VYSY…SGAI), 325–345 (LYFT…EYFF), 360–380 (FLLT…IGII), and 412–432 (LFYW…IYWW).

This sequence belongs to the cytochrome c oxidase subunit 3 family. As to quaternary structure, component of the cytochrome c oxidase (complex IV, CIV), a multisubunit enzyme composed of a catalytic core of 3 subunits and several supernumerary subunits. The complex exists as a monomer or a dimer and forms supercomplexes (SCs) in the inner mitochondrial membrane with ubiquinol-cytochrome c oxidoreductase (cytochrome b-c1 complex, complex III, CIII).

The protein resides in the mitochondrion inner membrane. It catalyses the reaction 4 Fe(II)-[cytochrome c] + O2 + 8 H(+)(in) = 4 Fe(III)-[cytochrome c] + 2 H2O + 4 H(+)(out). Its function is as follows. Component of the cytochrome c oxidase, the last enzyme in the mitochondrial electron transport chain which drives oxidative phosphorylation. The respiratory chain contains 3 multisubunit complexes succinate dehydrogenase (complex II, CII), ubiquinol-cytochrome c oxidoreductase (cytochrome b-c1 complex, complex III, CIII) and cytochrome c oxidase (complex IV, CIV), that cooperate to transfer electrons derived from NADH and succinate to molecular oxygen, creating an electrochemical gradient over the inner membrane that drives transmembrane transport and the ATP synthase. Cytochrome c oxidase is the component of the respiratory chain that catalyzes the reduction of oxygen to water. Electrons originating from reduced cytochrome c in the intermembrane space (IMS) are transferred via the dinuclear copper A center (CU(A)) of subunit 2 and heme A of subunit 1 to the active site in subunit 1, a binuclear center (BNC) formed by heme A3 and copper B (CU(B)). The BNC reduces molecular oxygen to 2 water molecules using 4 electrons from cytochrome c in the IMS and 4 protons from the mitochondrial matrix. This Dictyostelium discoideum (Social amoeba) protein is Cytochrome c oxidase subunit 3 (cox3).